We begin with the raw amino-acid sequence, 469 residues long: Ribonuclease Y (469 aa).

A helical membrane pass occupies residues 6 to 26 (VTLILVGVIIFLFISLFFYVI). In terms of domain architecture, KH spans 149-209 (FSFTIKLENE…IRREKAKRTM (61 aa)). The region spanning 276 to 369 (VLLHCVEAAV…VKVVDKLSAS (94 aa)) is the HD domain.

Belongs to the RNase Y family.

Its subcellular location is the cell membrane. In terms of biological role, endoribonuclease that initiates mRNA decay. The protein is Ribonuclease Y of Malacoplasma penetrans (strain HF-2) (Mycoplasma penetrans).